The sequence spans 382 residues: O-methyltransferase okaF (382 aa).

S-adenosyl-L-methionine-binding residues include Glu-249 and Arg-287. His-291 (proton acceptor) is an active-site residue.

This sequence belongs to the class I-like SAM-binding methyltransferase superfamily. Cation-independent O-methyltransferase family.

The enzyme catalyses 3-desmethyl okaramine B + S-adenosyl-L-methionine = okaramine B + S-adenosyl-L-homocysteine + H(+). Its pathway is alkaloid biosynthesis. O-methyltransferase; part of the gene cluster that mediates the biosynthesis of okaramine B, a prenylated indole alkaloid that possesses an unusual octacyclic ring system, including a four-membered azetidine ring and an eight-membered azocine ring, and that exhibits insecticidal activity against silkworm larvae. Within the pathway, okaF catalyzes the last step which is the methylation of 3-desmethyl okaramine B to produce okaramine B. With okaG, OkaF is also able to produce okaramine D from okaramine E. The biosynthesis begins with the NRPS okaA that condenses two tryptophan molecules into cyclo(L-Trp-L-Trp). Prenylation by the prenyltransferase okaC then leads to the formation of cyclo(N8-(alpha,alpha-dimethylallyl)-L-Trp-6a-(alpha,alpha-dime-thylallyl)-L-Trp). This is followed by indole 2,3-epoxidation by the FAD-dependent monooxygenase okaB to facilitate the formation of the hexahydropyrrolo[2,3-b]indole (HPI) moiety of okaramine C. The cytochrome P450 monooxygenase okaD then likely catalyzes formation of the eight-membered ring of okaramine A. The dioxygenase okaE further forms the unusual 2-dimethyl-3-methyl-azetidine ring to yield 12-deshydroxyl okaramine E, as well as the hydroxylation of 12-deshydroxyl okaramine E to produce okaramine E. The cytochrome P450 monoxygenase okaG converts 12-deshydroxyl okaramine E into 3-desmethyl okaramine B which is further methylated by the methyltransferase okaF into okaramine B. In a shunt pathway, okaG and okaF together are also able to convert okaramine E into okaramine D. Okaramine H is produced by nonenzymatic conversion from okaramine A. In Penicillium ochrochloron, this protein is O-methyltransferase okaF.